A 193-amino-acid chain; its full sequence is Cilia- and flagella-associated protein 20 (193 aa).

This sequence belongs to the CFAP20 family. In terms of assembly, microtubule inner protein component of sperm flagellar doublet microtubules.

It localises to the nucleus. The protein resides in the cytoplasm. Its subcellular location is the cytoskeleton. The protein localises to the microtubule organizing center. It is found in the centrosome. It localises to the centriole. The protein resides in the cilium basal body. Its subcellular location is the cilium axoneme. The protein localises to the flagellum axoneme. Its function is as follows. Cilium- and flagellum-specific protein that plays a role in axonemal structure organization and motility. Microtubule inner protein (MIP) part of the dynein-decorated doublet microtubules (DMTs) in cilia axoneme, which is required for motile cilia beating. Involved in the regulation of the size and morphology of cilia. Required for axonemal microtubules polyglutamylation. The polypeptide is Cilia- and flagella-associated protein 20 (Homo sapiens (Human)).